The following is a 376-amino-acid chain: Chaperone protein DnaJ (376 aa).

Positions 5 to 70 (DYYEVLGVGR…DKKAAYDQFG (66 aa)) constitute a J domain. The CR-type zinc finger occupies 132-210 (GLTKELRIPT…CHGDGRVEKS (79 aa)). The Zn(2+) site is built by Cys145, Cys148, Cys162, Cys165, Cys184, Cys187, Cys198, and Cys201. CXXCXGXG motif repeat units follow at residues 145–152 (CDLCDGSG), 162–169 (CTTCHGQG), 184–191 (CPTCHGRG), and 198–205 (CSKCHGDG).

Belongs to the DnaJ family. In terms of assembly, homodimer. It depends on Zn(2+) as a cofactor.

It localises to the cytoplasm. In terms of biological role, participates actively in the response to hyperosmotic and heat shock by preventing the aggregation of stress-denatured proteins and by disaggregating proteins, also in an autonomous, DnaK-independent fashion. Unfolded proteins bind initially to DnaJ; upon interaction with the DnaJ-bound protein, DnaK hydrolyzes its bound ATP, resulting in the formation of a stable complex. GrpE releases ADP from DnaK; ATP binding to DnaK triggers the release of the substrate protein, thus completing the reaction cycle. Several rounds of ATP-dependent interactions between DnaJ, DnaK and GrpE are required for fully efficient folding. Also involved, together with DnaK and GrpE, in the DNA replication of plasmids through activation of initiation proteins. In Shewanella sp. (strain W3-18-1), this protein is Chaperone protein DnaJ.